The following is a 1278-amino-acid chain: Cytoplasmic FMR1-interacting protein 2 (1278 aa).

Lys-1062 bears the N6-acetyllysine mark.

It belongs to the CYFIP family. As to quaternary structure, component of the WAVE1 complex composed of ABI2, CYFIP2, BRK1, NCKAP1 and WASF1/WAVE1. Interacts with FMR1, FXR1 and FXR2. Interacts with FMR1 isoform 6; the interaction occurs in a RNA-dependent manner. Interacts with RAC1 (activated form) which causes the complex to dissociate, releasing activated WASF1. The complex can also be activated by NCK1. Interacts with SHANK3; the interaction mediates the association of SHANK3 with the WAVE1 complex. Interacts with TMEM108 (via N-terminus); the interaction associates TMEM108 with the WAVE1 complex. Expressed in T-cells. Increased expression is observed in CD4(+) T-lymphocytes from patients with multiple sclerosis (at protein level).

The protein localises to the cytoplasm. Its subcellular location is the nucleus. It is found in the perinuclear region. It localises to the synapse. The protein resides in the synaptosome. Functionally, involved in T-cell adhesion and p53/TP53-dependent induction of apoptosis. Does not bind RNA. As component of the WAVE1 complex, required for BDNF-NTRK2 endocytic trafficking and signaling from early endosomes. The protein is Cytoplasmic FMR1-interacting protein 2 of Homo sapiens (Human).